The chain runs to 275 residues: MPIVKRKPTSAGRRFVVNVVNADLHKGAPHAPLLEKKSKSGGRNNNGRITTRHIGGGHKQHYRVIDFRRNKDGIPAKVERLEYDPNRTAYIALVCYADGERRYIIAPKGVKAGDVIQSGDAAPIKPGNALPLRNIPVGSVVHCIEMKPGKGAQIARSAGTSVQLVAREGQYCTLRLRSGEMRKILSECRATLGEVSNSEHNLRSLGKAGASRWRGVRPTVRGVAMNPVDHPHGGGEGRTSGGRHPVSPWGTPTKGYKTRSNKRTDKMIVRRRNKK.

Disordered stretches follow at residues 28-54 (APHAPLLEKKSKSGGRNNNGRITTRHI) and 223-275 (VAMN…RNKK).

The protein belongs to the universal ribosomal protein uL2 family. Part of the 50S ribosomal subunit. Forms a bridge to the 30S subunit in the 70S ribosome.

Its function is as follows. One of the primary rRNA binding proteins. Required for association of the 30S and 50S subunits to form the 70S ribosome, for tRNA binding and peptide bond formation. It has been suggested to have peptidyltransferase activity; this is somewhat controversial. Makes several contacts with the 16S rRNA in the 70S ribosome. The sequence is that of Large ribosomal subunit protein uL2 from Saccharophagus degradans (strain 2-40 / ATCC 43961 / DSM 17024).